A 264-amino-acid polypeptide reads, in one-letter code: RNA-binding protein pos-1 (264 aa).

Positions 56–82 (QDKETQNSASQPTSEQSLANRDPCTVP) are disordered. The segment covering 61-74 (QNSASQPTSEQSLA) has biased composition (polar residues). 2 C3H1-type zinc fingers span residues 98-126 (AFKT…HGVH) and 141-169 (KYKT…HKIV). 8 residues coordinate Zn(2+): Cys104, Cys113, Cys119, His123, Cys147, Cys156, Cys162, and His166.

As to quaternary structure, monomer.

It localises to the cytoplasm. Functionally, RNA-binding protein that coordinates cell fate specification and differentiation during early embryogenesis. Binds to a consensus pos-1 recognition element (PRE) consisting of the sequence 5'-UA(U 2-3)RGD(N 1-3)G-3', where R is any purine, D is A, G, or U, and N is any base. The PRE motif is found within the 3' untranslated region of many maternal transcripts required for early development. Binds to the 3' untranslated region (UTR) of Notch receptor homolog glp-1, thereby repressing glp-1 translation in the posterior blastomeres in the embryo. Binding to glp-1 3' UTR excludes cell fate regulator gld-1 binding to an overlapping binding site in the glp-1 3' UTR. Binds to the neg-1 3'UTR thereby opposing neg-1 expression and cytoplasmic polyadenylation of the neg-1 mRNA poly(A) tail promoted by gld-2 and gld-3. By inhibiting the cytoplasmic lengthening of neg-1 mRNA, restricts the accumulation of neg-1 protein and promotes endo-mesoderm development in anterior blastomeres. Essential for germline specification. This chain is RNA-binding protein pos-1, found in Caenorhabditis elegans.